The following is a 411-amino-acid chain: Peptidase T (411 aa).

His78 serves as a coordination point for Zn(2+). Residue Asp80 is part of the active site. Asp140 serves as a coordination point for Zn(2+). Glu173 acts as the Proton acceptor in catalysis. Zn(2+) is bound by residues Glu174, Asp196, and His379.

It belongs to the peptidase M20B family. Zn(2+) serves as cofactor.

Its subcellular location is the cytoplasm. It carries out the reaction Release of the N-terminal residue from a tripeptide.. Functionally, cleaves the N-terminal amino acid of tripeptides. In Yersinia pseudotuberculosis serotype O:3 (strain YPIII), this protein is Peptidase T.